A 217-amino-acid chain; its full sequence is Adenylate kinase (217 aa).

An ATP-binding site is contributed by 11 to 16 (GAGKGT). The segment at 31–60 (STGDMFREAMANKTPVGLEAKSYIDKGDLV) is NMP. Residues Thr-32, Arg-37, 58–60 (DLV), 86–89 (GFPR), and Gln-93 contribute to the AMP site. Residues 127–165 (ARFMCKNCGATYNKFSKKPKVEGTCDRCGGHEFYQREDD) are LID. Arg-128 serves as a coordination point for ATP. The Zn(2+) site is built by Cys-131 and Cys-134. 137–138 (TY) is a binding site for ATP. Residues Cys-151 and Cys-154 each coordinate Zn(2+). AMP contacts are provided by Arg-162 and Arg-173. Gln-201 is an ATP binding site.

It belongs to the adenylate kinase family. Monomer.

Its subcellular location is the cytoplasm. The catalysed reaction is AMP + ATP = 2 ADP. It participates in purine metabolism; AMP biosynthesis via salvage pathway; AMP from ADP: step 1/1. Its function is as follows. Catalyzes the reversible transfer of the terminal phosphate group between ATP and AMP. Plays an important role in cellular energy homeostasis and in adenine nucleotide metabolism. This Lactobacillus delbrueckii subsp. bulgaricus (strain ATCC 11842 / DSM 20081 / BCRC 10696 / JCM 1002 / NBRC 13953 / NCIMB 11778 / NCTC 12712 / WDCM 00102 / Lb 14) protein is Adenylate kinase.